We begin with the raw amino-acid sequence, 653 residues long: Chaperone protein dnaK3 (653 aa).

T197 carries the post-translational modification Phosphothreonine; by autocatalysis.

It belongs to the heat shock protein 70 family.

In terms of biological role, acts as a chaperone. The sequence is that of Chaperone protein dnaK3 (dnaK3) from Nostoc sp. (strain PCC 7120 / SAG 25.82 / UTEX 2576).